The primary structure comprises 347 residues: S-adenosylmethionine:tRNA ribosyltransferase-isomerase (347 aa).

Belongs to the QueA family. In terms of assembly, monomer.

The protein resides in the cytoplasm. The catalysed reaction is 7-aminomethyl-7-carbaguanosine(34) in tRNA + S-adenosyl-L-methionine = epoxyqueuosine(34) in tRNA + adenine + L-methionine + 2 H(+). The protein operates within tRNA modification; tRNA-queuosine biosynthesis. Functionally, transfers and isomerizes the ribose moiety from AdoMet to the 7-aminomethyl group of 7-deazaguanine (preQ1-tRNA) to give epoxyqueuosine (oQ-tRNA). The polypeptide is S-adenosylmethionine:tRNA ribosyltransferase-isomerase (Erythrobacter litoralis (strain HTCC2594)).